The sequence spans 467 residues: Heat shock factor protein 3 (467 aa).

The DNA-binding element occupies 16–121 (VPGFLAKLWA…LLENIKRKVS (106 aa)). Residues 128 to 201 (LKVCAEDLHK…LSLMRGNYIV (74 aa)) are hydrophobic repeat HR-A/B. A hydrophobic repeat HR-C region spans residues 364–389 (IQDFLNCIDASLEELQAMLSGKQYSF). The disordered stretch occupies residues 427–449 (EDLGASERETAGSKGGQEGTESC).

This sequence belongs to the HSF family. In terms of assembly, homotrimer. As to expression, expressed in most tissues. High levels are found in erythrocytes and low levels in liver.

Its subcellular location is the cytoplasm. The protein resides in the nucleus. Functionally, DNA-binding protein that specifically binds heat shock promoter elements (HSE) and activates transcription. HSF3 binds DNA constitutively only when the C-terminal region is deleted. This chain is Heat shock factor protein 3 (HSF3), found in Gallus gallus (Chicken).